The sequence spans 183 residues: Adenine phosphoribosyltransferase (183 aa).

It belongs to the purine/pyrimidine phosphoribosyltransferase family. In terms of assembly, homodimer.

The protein resides in the cytoplasm. The catalysed reaction is AMP + diphosphate = 5-phospho-alpha-D-ribose 1-diphosphate + adenine. Its pathway is purine metabolism; AMP biosynthesis via salvage pathway; AMP from adenine: step 1/1. In terms of biological role, catalyzes a salvage reaction resulting in the formation of AMP, that is energically less costly than de novo synthesis. The sequence is that of Adenine phosphoribosyltransferase from Escherichia coli O157:H7.